Here is a 371-residue protein sequence, read N- to C-terminus: Chorismate synthase (371 aa).

NADP(+) is bound by residues R48 and R54. FMN-binding positions include 132–134 (RSS), 244–245 (NA), G289, 304–308 (KPTSS), and R330.

The protein belongs to the chorismate synthase family. As to quaternary structure, homotetramer. The cofactor is FMNH2.

The enzyme catalyses 5-O-(1-carboxyvinyl)-3-phosphoshikimate = chorismate + phosphate. It functions in the pathway metabolic intermediate biosynthesis; chorismate biosynthesis; chorismate from D-erythrose 4-phosphate and phosphoenolpyruvate: step 7/7. Its function is as follows. Catalyzes the anti-1,4-elimination of the C-3 phosphate and the C-6 proR hydrogen from 5-enolpyruvylshikimate-3-phosphate (EPSP) to yield chorismate, which is the branch point compound that serves as the starting substrate for the three terminal pathways of aromatic amino acid biosynthesis. This reaction introduces a second double bond into the aromatic ring system. The protein is Chorismate synthase of Methylobacterium nodulans (strain LMG 21967 / CNCM I-2342 / ORS 2060).